The primary structure comprises 108 residues: Large ribosomal subunit protein uL24 (108 aa).

It belongs to the universal ribosomal protein uL24 family. In terms of assembly, part of the 50S ribosomal subunit.

One of two assembly initiator proteins, it binds directly to the 5'-end of the 23S rRNA, where it nucleates assembly of the 50S subunit. Its function is as follows. One of the proteins that surrounds the polypeptide exit tunnel on the outside of the subunit. The chain is Large ribosomal subunit protein uL24 from Mycoplasma mycoides subsp. mycoides SC (strain CCUG 32753 / NCTC 10114 / PG1).